A 571-amino-acid polypeptide reads, in one-letter code: Probable pectinesterase/pectinesterase inhibitor 58 (571 aa).

A signal peptide spans 1 to 28 (MGVDGELKKKKCIIAGVITALLVLMVVA). Asn36, Asn91, Asn207, and Asn216 each carry an N-linked (GlcNAc...) asparagine glycan. The interval 49–204 (KTATTAVEAV…RELTSNGLAM (156 aa)) is pectinesterase inhibitor 58. The interval 259–556 (NVVVAHDGSG…FTPARFLRGN (298 aa)) is pectinesterase 58. Thr335 serves as a coordination point for substrate. N-linked (GlcNAc...) asparagine glycosylation is present at Asn347. Position 365 (Gln365) interacts with substrate. The active-site Proton donor; for pectinesterase activity is Asp388. Cys402 and Cys422 form a disulfide bridge. Asp409 (nucleophile; for pectinesterase activity) is an active-site residue. The substrate site is built by Arg477 and Trp479.

This sequence in the N-terminal section; belongs to the PMEI family. It in the C-terminal section; belongs to the pectinesterase family. In terms of tissue distribution, expressed in siliques, but not in flower buds.

The protein localises to the secreted. It localises to the cell wall. The catalysed reaction is [(1-&gt;4)-alpha-D-galacturonosyl methyl ester](n) + n H2O = [(1-&gt;4)-alpha-D-galacturonosyl](n) + n methanol + n H(+). It participates in glycan metabolism; pectin degradation; 2-dehydro-3-deoxy-D-gluconate from pectin: step 1/5. Its function is as follows. Acts in the modification of cell walls via demethylesterification of cell wall pectin. The polypeptide is Probable pectinesterase/pectinesterase inhibitor 58 (PME58) (Arabidopsis thaliana (Mouse-ear cress)).